The chain runs to 263 residues: Pyruvate formate-lyase-activating enzyme (263 aa).

The Radical SAM core domain occupies 23 to 260 (VDGPGIRFVV…TETYEEYKKR (238 aa)). 3 residues coordinate [4Fe-4S] cluster: Cys37, Cys41, and Cys44. S-adenosyl-L-methionine is bound by residues 43 to 45 (YCH), Gly87, 142 to 144 (DIK), and His215.

This sequence belongs to the organic radical-activating enzymes family. The cofactor is [4Fe-4S] cluster.

It is found in the cytoplasm. The catalysed reaction is glycyl-[formate C-acetyltransferase] + reduced [flavodoxin] + S-adenosyl-L-methionine = glycin-2-yl radical-[formate C-acetyltransferase] + semiquinone [flavodoxin] + 5'-deoxyadenosine + L-methionine + H(+). Activation of pyruvate formate-lyase under anaerobic conditions by generation of an organic free radical, using S-adenosylmethionine and reduced flavodoxin as cosubstrates to produce 5'-deoxy-adenosine. This chain is Pyruvate formate-lyase-activating enzyme (act), found in Streptococcus mutans serotype c (strain ATCC 700610 / UA159).